The chain runs to 240 residues: MVVLAVSIVNRGGKAIISRQFREMSRVRVESLLSSFPALVSEKSQNTTVESDNVRFVYQPLDELYIVLITNLQSNILQDIDTLHLLSQVVTSICSSLEEREILEYAFEIFTAFDEATSLGYRDNVSLTQIKTYLEMESHEEKIQEIVSRNKEIEATEERKRRIKQLELQKKEAARRAAQNLPSADAYESIGYQTVNTTFATSNVEDESAMESYHAAAKASSAPKAKGMQLGKKKNTSLLY.

The segment covering 215 to 226 (AAAKASSAPKAK) has biased composition (low complexity). The segment at 215–240 (AAAKASSAPKAKGMQLGKKKNTSLLY) is disordered. Positions 231–240 (GKKKNTSLLY) are enriched in basic residues.

This sequence belongs to the adaptor complexes medium subunit family. Delta-COP subfamily. In terms of assembly, oligomeric complex that consists of at least the alpha, beta, beta', gamma, delta, epsilon and zeta subunits.

It is found in the cytoplasm. The protein resides in the nucleus. Functionally, the coatomer is a cytosolic protein complex that binds to dilysine motifs and reversibly associates with Golgi non-clathrin-coated vesicles, which further mediate biosynthetic protein transport from the ER, via the Golgi up to the trans Golgi network. Coatomer complex is required for budding from Golgi membranes, and is essential for the retrograde Golgi-to-ER transport of dilysine-tagged proteins. This Schizosaccharomyces pombe (strain 972 / ATCC 24843) (Fission yeast) protein is Coatomer subunit delta (ret2).